A 404-amino-acid chain; its full sequence is uncharacterized protein (404 aa).

This is an uncharacterized protein from Mycoplasma genitalium (strain ATCC 33530 / DSM 19775 / NCTC 10195 / G37) (Mycoplasmoides genitalium).